Reading from the N-terminus, the 117-residue chain is Ribonuclease P protein component (117 aa).

This sequence belongs to the RnpA family. As to quaternary structure, consists of a catalytic RNA component (M1 or rnpB) and a protein subunit.

The enzyme catalyses Endonucleolytic cleavage of RNA, removing 5'-extranucleotides from tRNA precursor.. In terms of biological role, RNaseP catalyzes the removal of the 5'-leader sequence from pre-tRNA to produce the mature 5'-terminus. It can also cleave other RNA substrates such as 4.5S RNA. The protein component plays an auxiliary but essential role in vivo by binding to the 5'-leader sequence and broadening the substrate specificity of the ribozyme. The chain is Ribonuclease P protein component from Lactococcus lactis subsp. cremoris (strain MG1363).